The sequence spans 65 residues: uncharacterized protein (65 aa).

This is an uncharacterized protein from Acheta domesticus (House cricket).